The primary structure comprises 799 residues: Phenylalanine--tRNA ligase beta subunit (799 aa).

Residues 39 to 150 (GKGFSGVIVG…EHLQAGTALN (112 aa)) enclose the tRNA-binding domain. In terms of domain architecture, B5 spans 402 to 478 (FLELTIRCRL…RIYGYDHIPR (77 aa)). Mg(2+)-binding residues include Asp-456, Asp-462, Glu-465, and Glu-466. Residues 705–798 (AIYPGSERDW…VSQKFANDLK (94 aa)) enclose the FDX-ACB domain.

It belongs to the phenylalanyl-tRNA synthetase beta subunit family. Type 1 subfamily. Tetramer of two alpha and two beta subunits. The cofactor is Mg(2+).

The protein resides in the cytoplasm. It catalyses the reaction tRNA(Phe) + L-phenylalanine + ATP = L-phenylalanyl-tRNA(Phe) + AMP + diphosphate + H(+). The polypeptide is Phenylalanine--tRNA ligase beta subunit (Protochlamydia amoebophila (strain UWE25)).